Reading from the N-terminus, the 332-residue chain is Formamidase (332 aa).

The CN hydrolase domain occupies 14–259; that stretch reads FLTALIQYPV…WEIVTAEVYP (246 aa). The active-site Proton acceptor is the E60. K132 (proton donor) is an active-site residue. The active-site Nucleophile is C165.

The protein belongs to the carbon-nitrogen hydrolase superfamily. Aliphatic amidase family.

It carries out the reaction formamide + H2O = formate + NH4(+). In terms of biological role, is an aliphatic amidase with a restricted substrate specificity, as it only hydrolyzes formamide. The sequence is that of Formamidase from Bacillus cereus (strain ZK / E33L).